Reading from the N-terminus, the 78-residue chain is MSRVCQVTGKRPVTGNNRSHALNATKRRFLPNLHSHRFWVESEKRFVTLRVSAKGMRVIDKKGIDTVLSELRARGEKY.

The protein belongs to the bacterial ribosomal protein bL28 family.

The polypeptide is Large ribosomal subunit protein bL28 (Klebsiella pneumoniae (strain 342)).